The primary structure comprises 442 residues: Probable glycine dehydrogenase (decarboxylating) subunit 1 (442 aa).

Belongs to the GcvP family. N-terminal subunit subfamily. As to quaternary structure, the glycine cleavage system is composed of four proteins: P, T, L and H. In this organism, the P 'protein' is a heterodimer of two subunits.

It carries out the reaction N(6)-[(R)-lipoyl]-L-lysyl-[glycine-cleavage complex H protein] + glycine + H(+) = N(6)-[(R)-S(8)-aminomethyldihydrolipoyl]-L-lysyl-[glycine-cleavage complex H protein] + CO2. In terms of biological role, the glycine cleavage system catalyzes the degradation of glycine. The P protein binds the alpha-amino group of glycine through its pyridoxal phosphate cofactor; CO(2) is released and the remaining methylamine moiety is then transferred to the lipoamide cofactor of the H protein. In Geotalea daltonii (strain DSM 22248 / JCM 15807 / FRC-32) (Geobacter daltonii), this protein is Probable glycine dehydrogenase (decarboxylating) subunit 1.